Here is a 197-residue protein sequence, read N- to C-terminus: Na(+)-translocating NADH-quinone reductase subunit E (197 aa).

Helical transmembrane passes span 11–31 (SVFI…FLAV), 35–55 (VSTA…SVPA), 76–96 (FLKF…LEMF), 108–128 (LGIY…VSFM), 139–159 (VVYG…LAGI), and 175–195 (LGIT…FSGI).

Belongs to the NqrDE/RnfAE family. Composed of six subunits; NqrA, NqrB, NqrC, NqrD, NqrE and NqrF.

The protein localises to the cell inner membrane. It catalyses the reaction a ubiquinone + n Na(+)(in) + NADH + H(+) = a ubiquinol + n Na(+)(out) + NAD(+). Functionally, NQR complex catalyzes the reduction of ubiquinone-1 to ubiquinol by two successive reactions, coupled with the transport of Na(+) ions from the cytoplasm to the periplasm. NqrA to NqrE are probably involved in the second step, the conversion of ubisemiquinone to ubiquinol. The sequence is that of Na(+)-translocating NADH-quinone reductase subunit E from Neisseria gonorrhoeae (strain ATCC 700825 / FA 1090).